The primary structure comprises 329 residues: Ketol-acid reductoisomerase (NADP(+)) (329 aa).

In terms of domain architecture, KARI N-terminal Rossmann spans 2–182 (TQLFYDTDAD…GGTRAGILET (181 aa)). NADP(+)-binding positions include 25–28 (YGSQ), Ser51, Ser53, and 83–86 (DEFQ). Residue His108 is part of the active site. Gly134 is an NADP(+) binding site. Residues 183–328 (NFKEETETDL…KSLRSMFSWL (146 aa)) enclose the KARI C-terminal knotted domain. Residues Asp191, Glu195, Glu227, and Glu231 each coordinate Mg(2+). Ser252 is a binding site for substrate.

Belongs to the ketol-acid reductoisomerase family. Requires Mg(2+) as cofactor.

It catalyses the reaction (2R)-2,3-dihydroxy-3-methylbutanoate + NADP(+) = (2S)-2-acetolactate + NADPH + H(+). The enzyme catalyses (2R,3R)-2,3-dihydroxy-3-methylpentanoate + NADP(+) = (S)-2-ethyl-2-hydroxy-3-oxobutanoate + NADPH + H(+). Its pathway is amino-acid biosynthesis; L-isoleucine biosynthesis; L-isoleucine from 2-oxobutanoate: step 2/4. The protein operates within amino-acid biosynthesis; L-valine biosynthesis; L-valine from pyruvate: step 2/4. Involved in the biosynthesis of branched-chain amino acids (BCAA). Catalyzes an alkyl-migration followed by a ketol-acid reduction of (S)-2-acetolactate (S2AL) to yield (R)-2,3-dihydroxy-isovalerate. In the isomerase reaction, S2AL is rearranged via a Mg-dependent methyl migration to produce 3-hydroxy-3-methyl-2-ketobutyrate (HMKB). In the reductase reaction, this 2-ketoacid undergoes a metal-dependent reduction by NADPH to yield (R)-2,3-dihydroxy-isovalerate. This Prochlorococcus marinus (strain MIT 9301) protein is Ketol-acid reductoisomerase (NADP(+)).